The following is a 225-amino-acid chain: Interleukin-6 (225 aa).

The first 24 residues, 1–24 (MPSRLNVFWLCAAALAALLRCAPA), serve as a signal peptide directing secretion. Residue asparagine 98 is glycosylated (N-linked (GlcNAc...) asparagine).

This sequence belongs to the IL-6 superfamily. As to quaternary structure, component of a hexamer of two molecules each of IL6, IL6R and IL6ST; first binds to IL6R to associate with the signaling subunit IL6ST. Expressed in white muscle, skin, spleen, anterior intestine and stomach. Not expressed in brain, gill, head kidney, posterior intestine and adipose tissue.

It is found in the secreted. Cytokine with a wide variety of biological functions in immunity, tissue regeneration, and metabolism. Binds to IL6R, then the complex associates to the signaling subunit IL6ST/gp130 to trigger the intracellular IL6-signaling pathway. The interaction with the membrane-bound IL6R and IL6ST stimulates 'classic signaling', whereas the binding of IL6 and soluble IL6R to IL6ST stimulates 'trans-signaling'. Alternatively, 'cluster signaling' occurs when membrane-bound IL6:IL6R complexes on transmitter cells activate IL6ST receptors on neighboring receiver cells. This is Interleukin-6 (il6) from Sparus aurata (Gilthead sea bream).